Here is a 145-residue protein sequence, read N- to C-terminus: RxLR effector protein BLR40 (145 aa).

The first 22 residues, 1–22 (MLLSRAISVVALLACICCGVHT), serve as a signal peptide directing secretion. A RxLR-dEER motif is present at residues 44–58 (RRLRTSVDLVDNEER).

This sequence belongs to the RxLR effector family.

Its subcellular location is the secreted. It localises to the host cell membrane. Functionally, secreted effector that triggers a robust hypersensitive response (HR) in Lactuca sativa cv. Design that is resistant to multiple B.lactucae races, including Bl:24. The protein is RxLR effector protein BLR40 of Bremia lactucae (Lettuce downy mildew).